The primary structure comprises 233 residues: Cobalt-containing nitrile hydratase subunit beta (233 aa).

It belongs to the nitrile hydratase subunit beta family. In terms of assembly, heterotetramer of two alpha and two beta chains.

It carries out the reaction an aliphatic primary amide = an aliphatic nitrile + H2O. Its function is as follows. NHase catalyzes the hydration of various nitrile compounds to the corresponding amides. This is Cobalt-containing nitrile hydratase subunit beta from Pseudonocardia thermophila.